The primary structure comprises 169 residues: Disulfide bond formation protein B 1 (169 aa).

The Cytoplasmic segment spans residues 1–14 (MSDDRLGLGRERRF). A helical transmembrane segment spans residues 15-31 (LVLLGIICLALIGGALY). The Periplasmic segment spans residues 32-49 (MQVVLGEAPCPLCILQRY). Cys41 and Cys44 are disulfide-bonded. Residues 50–64 (ALLLIALFAFIGAAM) traverse the membrane as a helical segment. Over 65–71 (SSRRGVT) the chain is Cytoplasmic. A helical membrane pass occupies residues 72-89 (VMETLVVICALAGAGVAG). Topologically, residues 90-144 (HHVYTQFYPSVSCGIDVLQPIVDSLPLAKIFPLGFQVDGFCSTPYPPILGLSLAQ) are periplasmic. Cys102 and Cys130 form a disulfide bridge. The chain crosses the membrane as a helical span at residues 145–163 (WALVAFVLTVILVPLGVVR). Residues 164–169 (NRKKTY) are Cytoplasmic-facing.

Belongs to the DsbB family.

The protein resides in the cell inner membrane. Functionally, required for disulfide bond formation in some periplasmic proteins. Acts by oxidizing the DsbA protein. The chain is Disulfide bond formation protein B 1 from Pseudomonas fluorescens (strain ATCC BAA-477 / NRRL B-23932 / Pf-5).